Consider the following 407-residue polypeptide: Tyrosine--tRNA ligase (407 aa).

Tyr35 lines the L-tyrosine pocket. The 'HIGH' region signature appears at 40 to 49 (PTADSLHVGH). Positions 168 and 172 each coordinate L-tyrosine. The 'KMSKS' region signature appears at 228–232 (KMGKT). Residue Lys231 participates in ATP binding. The region spanning 341-405 (NPLVDLLAKC…RGKKNFNRIV (65 aa)) is the S4 RNA-binding domain.

Belongs to the class-I aminoacyl-tRNA synthetase family. TyrS type 1 subfamily. In terms of assembly, homodimer.

Its subcellular location is the cytoplasm. The catalysed reaction is tRNA(Tyr) + L-tyrosine + ATP = L-tyrosyl-tRNA(Tyr) + AMP + diphosphate + H(+). Its function is as follows. Catalyzes the attachment of tyrosine to tRNA(Tyr) in a two-step reaction: tyrosine is first activated by ATP to form Tyr-AMP and then transferred to the acceptor end of tRNA(Tyr). This chain is Tyrosine--tRNA ligase, found in Clostridium botulinum (strain 657 / Type Ba4).